The sequence spans 101 residues: Small ribosomal subunit protein uS14 (101 aa).

This sequence belongs to the universal ribosomal protein uS14 family. Part of the 30S ribosomal subunit. Contacts proteins S3 and S10.

Binds 16S rRNA, required for the assembly of 30S particles and may also be responsible for determining the conformation of the 16S rRNA at the A site. This Paracoccus denitrificans (strain Pd 1222) protein is Small ribosomal subunit protein uS14.